The primary structure comprises 1428 residues: MPRLKLPKSFKDELESEKTTTTSSRKKAPVVDPKQTLMSSFFTPVSKSTDTKEINNKEDKDEDKDKDKDNKKTKKSKDTSDNEDMVDDNNKQQKEKKATPNKSNSPQSPQTSKSPLTRRSSANGNSDSKIDNKEKEKEKEKEKEKDKSTPTKTTSSRVKKDTEVSKSIPPKLSKQTKKKQISSDNDIYDDEKDSEEEDLEDDHDDEEEKVVVKKPSKPTSKSITAKPASTKATTTTTTTTTTTSTGRTRVNRVNLDISFSSESEEDEKPKKKIIGKKRKKKDDSDFDSESESDTISEASEVEPESEEDLDSFKFNSKKKNNNKNNNNKKKNDEYEDEEEDEDDELFKDIEMKDKPEEEEKEEEGDPIVIGSGRVVLPKGTPDFQPDPKAGKKLLKAHLEIQSKEEAKRLQQANGGGGDGGGGQIKGSDDEDEEVKKPTKGGSKASAKKKGPAYTPLEQQYIAIKKENPDTVLMVECGYKYKFFGEDAEVANKVLNIYSYVAKNFLNCSIPTQRLFFHLRRLVMAGYKVGIVEQTETAALKAISSSKSQPFERKLTRVYTSSTFIDDDIDDQLTSSSPQFLVSFYESTPKNKNDDVIKKQRDNEEEGIDSSNESSTSTISFVAVSVKTGEIIYDTFKDNVMRSQLETILTHIKPSEILIPPTTTTVNKQKVNNGIGTNHYYFSNLTSKCLKTYTKSTNVRTQAMDSQLYDYEYSLGKLIDFYEDESNNNNNNNNCEDVLKFVKSTLNKEQIICLGILLSYLNEFIHFGSILKVESNFKAFRVSNHLVLPHSTIVNLELLVNESDNKEKGSLIWLMNRTSTFSGSRMFINWICKPLNQLELIKERQDAVEELVNGIKTNSPPIVSIISLFKSHIPDLQRNLSRIYYKVQCTPKEFLNTMTSLQRIVELFKEINNNNSSYKFNSTLLNSIFKLQNDNKDGDSDSFDYIGGEDKLSKRIKYFLSNINKETAKEYGTVGCDKSNLWVDLEKYEKIRETKEKIEQVEKEFKNVLKNIRKELSKPSLEYHHMPGLGLEYLLELPPSFKAVPKSWIKVNSTQKMARYHAPEVLEQLKILSQSRETLKIQSQESWISFLGEFSVDYSLFSNFVNKISNLDCLFSLAKVSSLEGYIRPQFVKEKKDGGIQIENGRHPVVEAILSGSDGSYVPNTIELRESACKSMIITGPNMGGKSSLLRQTALIVIMAQVGCFVPATSCSLSVFDAIYTRMGARDSIGTGKSTFFIELEETSDILKNSTQNTLVILDELGRGTSTNDGVAIAYSTLKYIVEVMKCYCLFVTHYPLLAQLELQYPTQVGNFHMGYLEEKQDQQLQKSVIPKVIFLYKLVKGAAQNSYGLNIARLAGLPMEVIADALKKSNEMKESITRRANLSDGKDQQQIENEIKSIIKNWNSNRTTLNSNDLLQFIEKFKSIQLKL.

3 disordered regions span residues 1–391 (MPRL…KAGK), 405–451 (EAKR…KKGP), and 592–612 (NDDV…SSNE). Residues 9–18 (SFKDELESEK) show a composition bias toward basic and acidic residues. A compositionally biased stretch (polar residues) spans 36–48 (TLMSSFFTPVSKS). Composition is skewed to basic and acidic residues over residues 49-80 (TDTK…KDTS) and 88-98 (DNNKQQKEKKA). Residues 100–125 (PNKSNSPQSPQTSKSPLTRRSSANGN) show a composition bias toward polar residues. Residues 128–149 (SKIDNKEKEKEKEKEKEKDKST) are compositionally biased toward basic and acidic residues. The segment covering 186–208 (DIYDDEKDSEEEDLEDDHDDEEE) has biased composition (acidic residues). The span at 217 to 245 (KPTSKSITAKPASTKATTTTTTTTTTTST) shows a compositional bias: low complexity. The span at 270-280 (KKKIIGKKRKK) shows a compositional bias: basic residues. Acidic residues-rich tracts occupy residues 284-309 (SDFD…EEDL) and 333-345 (EYED…DDEL). Residues 346–357 (FKDIEMKDKPEE) are compositionally biased toward basic and acidic residues. Residues 413–424 (NGGGGDGGGGQI) are compositionally biased toward gly residues. Positions 592–601 (NDDVIKKQRD) are enriched in basic and acidic residues.

This sequence belongs to the DNA mismatch repair MutS family. MSH3 subfamily. Heterodimer consisting of msh2-msh3 (MutS beta). Forms a ternary complex with MutL alpha (mlh1-pms1). Interacts with exo1.

Functionally, component of the post-replicative DNA mismatch repair system (MMR). Heterodimerizes with msh2 to form MutS beta, which binds to DNA mismatches thereby initiating DNA repair. When bound, the MutS beta heterodimer bends the DNA helix and shields approximately 20 base pairs. MutS beta recognizes large insertion-deletion loops (IDL) up to 13 nucleotides long. After mismatch binding, forms a ternary complex with the MutL alpha heterodimer, which is thought to be responsible for directing the downstream MMR events, including strand discrimination, excision, and resynthesis. The chain is DNA mismatch repair protein Msh3 (msh3) from Dictyostelium discoideum (Social amoeba).